We begin with the raw amino-acid sequence, 277 residues long: Large ribosomal subunit protein mL46 (277 aa).

Lysine 217 bears the N6-succinyllysine mark. At lysine 228 the chain carries N6-acetyllysine. Residue lysine 246 is modified to N6-succinyllysine.

The protein belongs to the mitochondrion-specific ribosomal protein mL46 family. In terms of assembly, component of the mitochondrial ribosome large subunit (39S) which comprises a 16S rRNA and about 50 distinct proteins.

Its subcellular location is the mitochondrion. The polypeptide is Large ribosomal subunit protein mL46 (Mrpl46) (Rattus norvegicus (Rat)).